Consider the following 300-residue polypeptide: Ribosomal protein bS6--L-glutamate ligase (300 aa).

Residues 104-287 (MQLLARQGID…IAGKMIRWIE (184 aa)) form the ATP-grasp domain. Residues K141, 178–179 (EY), D187, and 211–213 (RSN) each bind ATP. The Mg(2+) site is built by D248, E260, and N262. Residues D248, E260, and N262 each contribute to the Mn(2+) site.

The protein belongs to the RimK family. Mg(2+) serves as cofactor. Mn(2+) is required as a cofactor.

Functionally, an L-glutamate ligase that catalyzes the ATP-dependent post-translational addition of glutamate residues to the C-terminus of ribosomal protein bS6 (RpsF). Is also able to catalyze the synthesis of poly-alpha-glutamate in vitro, via ATP hydrolysis from unprotected glutamate as substrate. The number of glutamate residues added to either RpsF or to poly-alpha-glutamate changes with pH. The polypeptide is Ribosomal protein bS6--L-glutamate ligase (Escherichia coli O139:H28 (strain E24377A / ETEC)).